A 196-amino-acid polypeptide reads, in one-letter code: RNA pyrophosphohydrolase (196 aa).

Residues 6–149 (GYRPNVGIVI…KRDVYRKVMK (144 aa)) form the Nudix hydrolase domain. The short motif at 38-59 (GGINDNESAEQAMYRELHEEVG) is the Nudix box element.

This sequence belongs to the Nudix hydrolase family. RppH subfamily. It depends on a divalent metal cation as a cofactor.

In terms of biological role, accelerates the degradation of transcripts by removing pyrophosphate from the 5'-end of triphosphorylated RNA, leading to a more labile monophosphorylated state that can stimulate subsequent ribonuclease cleavage. This is RNA pyrophosphohydrolase from Haemophilus influenzae (strain PittEE).